The following is a 529-amino-acid chain: Peptide chain release factor 3 (529 aa).

The tr-type G domain maps to 11 to 280 (AKRRTFAIIS…GLVEWAPAPM (270 aa)). Residues 20-27 (SHPDAGKT), 88-92 (DTPGH), and 142-145 (NKLD) each bind GTP.

This sequence belongs to the TRAFAC class translation factor GTPase superfamily. Classic translation factor GTPase family. PrfC subfamily.

Its subcellular location is the cytoplasm. Its function is as follows. Increases the formation of ribosomal termination complexes and stimulates activities of RF-1 and RF-2. It binds guanine nucleotides and has strong preference for UGA stop codons. It may interact directly with the ribosome. The stimulation of RF-1 and RF-2 is significantly reduced by GTP and GDP, but not by GMP. This is Peptide chain release factor 3 from Yersinia pestis bv. Antiqua (strain Antiqua).